The sequence spans 847 residues: Capsid-associated protein AC83 (847 aa).

Positions 1–19 are cleaved as a signal peptide; sequence MMSGVMLLMLAIFLIIAFT. The C2HC BV-type zinc finger occupies 148–197; sequence CVPVPPCDNKSAGLYPMDERLLDTLVLNQHLDKDYSTNAHLYHPTFYLRC. Residues N156 and N211 are each glycosylated (N-linked (GlcNAc...) asparagine; by host). 2 disulfide bridges follow: C208-C221 and C261-C274. The Chitin-binding type-2 domain maps to 224-282; it reads NELCENRPDGYILSYFPSNLLVNQFMQCVNGRHVVGECPANKIFDRNLMSCVEAHPCAF. N306, N337, N500, N592, N613, and N639 each carry an N-linked (GlcNAc...) asparagine; by host glycan. The tract at residues 665-698 is disordered; the sequence is DHWVVAPPTAPPPPPEPEPEPEPEPEPEPELPSP. The segment covering 681–693 has biased composition (acidic residues); it reads PEPEPEPEPEPEP.

Its subcellular location is the virion. Functionally, plays an essential role in nucleocapsid assembly. Essential for the establishment of efficient per os infection. This is Capsid-associated protein AC83 (p95) from Autographa californica nuclear polyhedrosis virus (AcMNPV).